A 148-amino-acid polypeptide reads, in one-letter code: MFDVTLLILLGLAALGFISHNTTVAVSILVLIIVRVTPLSTFFPWIEKQGLSIGIIILTIGVMAPIASGTLPPSTLIHSFLNWKSLVAIAVGVIVYWLGGRGVTLMGSQLQLVAGLLVGTVLGVALFRGVPVGPLIAAGLVSLIVGKQ.

The next 4 membrane-spanning stretches (helical) occupy residues 14–34, 51–71, 86–106, and 121–141; these read ALGF…LIIV, LSIG…SGTL, LVAI…VTLM, and VLGV…AGLV.

This sequence belongs to the UPF0756 family.

The protein localises to the cell membrane. This chain is UPF0756 membrane protein YeaL, found in Shigella dysenteriae serotype 1 (strain Sd197).